The chain runs to 874 residues: Alanine--tRNA ligase (874 aa).

Zn(2+) is bound by residues His-563, His-567, Cys-665, and His-669.

This sequence belongs to the class-II aminoacyl-tRNA synthetase family. Zn(2+) serves as cofactor.

The protein localises to the cytoplasm. It carries out the reaction tRNA(Ala) + L-alanine + ATP = L-alanyl-tRNA(Ala) + AMP + diphosphate. In terms of biological role, catalyzes the attachment of alanine to tRNA(Ala) in a two-step reaction: alanine is first activated by ATP to form Ala-AMP and then transferred to the acceptor end of tRNA(Ala). Also edits incorrectly charged Ser-tRNA(Ala) and Gly-tRNA(Ala) via its editing domain. The sequence is that of Alanine--tRNA ligase from Haemophilus influenzae (strain ATCC 51907 / DSM 11121 / KW20 / Rd).